The following is a 387-amino-acid chain: GDP-mannose transporter (387 aa).

Residues 1-25 (MADTKKNDNYAIDMDKLDAESDRFR) are compositionally biased toward basic and acidic residues. Over 1-42 (MADTKKNDNYAIDMDKLDAESDRFRPPPQPQPRHSSSSHSQS) the chain is Cytoplasmic. Residues 1–45 (MADTKKNDNYAIDMDKLDAESDRFRPPPQPQPRHSSSSHSQSISN) form a disordered region. Residues 32-45 (PRHSSSSHSQSISN) show a composition bias toward low complexity. A helical membrane pass occupies residues 43–63 (ISNSPVLPILSYCASSILMTV). Topologically, residues 64–71 (TNKYVLSG) are lumenal. The chain crosses the membrane as a helical span at residues 72-92 (VQFNLNFFLLCVQSVVCIIAI). Residues 93–112 (QTCKSMGLINYRDFNSDEAK) lie on the Cytoplasmic side of the membrane. The helical transmembrane segment at 113-129 (KWFPISLLLIGMIYTGT) threads the bilayer. The Lumenal portion of the chain corresponds to 130–136 (KALKFLS). Residues 137–153 (IPVYTIFKNLTIILIAY) traverse the membrane as a helical segment. The Cytoplasmic portion of the chain corresponds to 154 to 162 (GEVLWFGGS). A helical membrane pass occupies residues 163–184 (VTGMALFSFGLMVLSSVIAAWA). The Lumenal segment spans residues 185–206 (DIKHALDTSGFSGAEATSKIST). A helical transmembrane segment spans residues 207–227 (LNAGYIWMLINCLCTSTYILG). Residues 228–241 (MRKRIKLTNFKDFD) lie on the Cytoplasmic side of the membrane. The chain crosses the membrane as a helical span at residues 242–262 (TMFYNNLLSIPILMIGSFIVE). Residues 263–280 (DWSSENINKNFPIETRNS) are Lumenal-facing. A helical transmembrane segment spans residues 281-301 (LIFAMIFSGLSSVFISYTSAW). At 302–309 (CVRVTSST) the chain is on the cytoplasmic side. A helical membrane pass occupies residues 310–329 (TYSMVGALNKLPIALSGLIF). Over 330 to 332 (FGD) the chain is Lumenal. Residues 333-355 (PVTVPSVSAIVVGFISGIVYSLA) traverse the membrane as a helical segment. Topologically, residues 356–387 (KVKQNAKPRTGVLPTTNPVSASTQSMRDGLKS) are cytoplasmic. Residues 366–387 (GVLPTTNPVSASTQSMRDGLKS) are disordered. Over residues 368–381 (LPTTNPVSASTQSM) the composition is skewed to polar residues.

The protein belongs to the TPT transporter family. SLC35D subfamily. As to quaternary structure, homooligomer.

It is found in the golgi apparatus membrane. The protein resides in the cytoplasmic vesicle membrane. It localises to the endoplasmic reticulum membrane. Its function is as follows. Involved in the import of GDP-mannose from the cytoplasm into the Golgi lumen. The chain is GDP-mannose transporter (VRG4) from Coccidioides immitis (strain RS) (Valley fever fungus).